We begin with the raw amino-acid sequence, 100 residues long: Small ribosomal subunit protein uS14c (100 aa).

This sequence belongs to the universal ribosomal protein uS14 family. Part of the 30S ribosomal subunit.

Its subcellular location is the plastid. The protein resides in the chloroplast. Functionally, binds 16S rRNA, required for the assembly of 30S particles. The polypeptide is Small ribosomal subunit protein uS14c (Physcomitrium patens (Spreading-leaved earth moss)).